A 715-amino-acid chain; its full sequence is MKESTQQFLALTSPGIEVLLFDEIKSLGAFNVIQKPEGVYFQASLALGYKISLWTRLATRIMLKLGEGEAKDKDELFKAASSINWPDIFKSTTTFAVDFVGYSEEIRNSQFGGLTIKDAIVDQFRDQGFERPNVDKKAPQISFQARLLRDNVTIFLDFSGRGLFQRGYREHSGAAPLKENLAAALIIRSGWLNDTSKPLVDPMCGSGTILIEAVSMAAKQAPAINRQSWGFEAWLSHDNAVWQKQLTLAIDSSEENMSNLKVKVFGIDIDERVLRTAQQNARNAQLHQYIEFTCKNTNDMDNTFGQPGTILFNPPYGERIGELPELVENFVLFGQKLKMQFKDWRIAILTANVDLLSMLKLSSFKRYKFKNGPLDCQLALYNLDAKQGAKDAINPQSDFAEEDSAFANRLKKNRKNLKGWLKSNEIEAYRLYDGDIPEYNVAIDIYGEYLVIQEYAAPKTIEEDKAKKRLQEVIYWAPKVLNIPTDKVILKTRAKQRGANQYERLEKTKQSLTINEHGALFKINLWDYLDTGLFLDHRKTRQIVAKKSQGKSLLNLFAYTGSVSVQAAVQGAASITTVDMSNTYLNWAEDNFALNKLNGHKYQFIQADCLDWLKKNVNKFDVIFIDPPTFSNSKRMEDSFDVQRDHVDLITDALKSLNRGGEIFFTNNKRNFKIDFEALDELGLTAEAMSDVTRDKDFARNKHIHNSWSIKRTAT.

The region spanning L47–F158 is the THUMP domain.

The protein belongs to the methyltransferase superfamily. RlmKL family.

Its subcellular location is the cytoplasm. It carries out the reaction guanosine(2445) in 23S rRNA + S-adenosyl-L-methionine = N(2)-methylguanosine(2445) in 23S rRNA + S-adenosyl-L-homocysteine + H(+). The enzyme catalyses guanosine(2069) in 23S rRNA + S-adenosyl-L-methionine = N(2)-methylguanosine(2069) in 23S rRNA + S-adenosyl-L-homocysteine + H(+). Functionally, specifically methylates the guanine in position 2445 (m2G2445) and the guanine in position 2069 (m7G2069) of 23S rRNA. The chain is Ribosomal RNA large subunit methyltransferase K/L from Colwellia psychrerythraea (strain 34H / ATCC BAA-681) (Vibrio psychroerythus).